A 367-amino-acid chain; its full sequence is Homeobox protein Nkx-6.1 (367 aa).

The segment at 36 to 133 is disordered; the sequence is YPAAYPPLPA…SSSSSSSASA (98 aa). Composition is skewed to low complexity over residues 48-59, 78-91, and 110-133; these read PSSSSSSSSSSS, GGLS…QQLS, and ASGA…SASA. A repressor domain region spans residues 102–268; that stretch reads LSRPSMPVAS…KYLAGPERAR (167 aa). The residue at position 189 (arginine 189) is an Asymmetric dimethylarginine. The segment at residues 236–295 is a DNA-binding region (homeobox); the sequence is RKHTRPTFSGQQIFALEKTFEQTKYLAGPERARLAYSLGMTESQVKVWFQNRRTKWRKKH. Residues 294 to 367 form a disordered region; the sequence is KHAAEMATAK…LHASEPESSS (74 aa). A compositionally biased stretch (basic and acidic residues) spans 304-317; the sequence is KKQDSETERLKGAS. The segment at 306–367 is involved in DNA-binding; the sequence is QDSETERLKG…LHASEPESSS (62 aa).

In terms of tissue distribution, pancreatic beta cells.

It is found in the nucleus. Transcription factor which binds to specific A/T-rich DNA sequences in the promoter regions of a number of genes. Involved in the development of insulin-producing beta cells in the islets of Langerhans at the secondary transition. Together with NKX2-2 and IRX3 acts to restrict the generation of motor neurons to the appropriate region of the neural tube. Belongs to the class II proteins of neuronal progenitor factors, which are induced by SHH signals. This chain is Homeobox protein Nkx-6.1 (NKX6-1), found in Homo sapiens (Human).